The following is a 397-amino-acid chain: Lysophospholipid transporter LplT (397 aa).

11 helical membrane passes run 21 to 41 (SAQFLSAFGDNALLFATLALL), 53 to 73 (ILQMVFVGAYILFAPFVGQVA), 91 to 111 (LGAASICFGFNPFIGYTLVGI), 139 to 159 (LMESSTIAAILLGSVAGGVLA), 164 to 184 (LAALGICAVVYAGAVVANLFI), 229 to 249 (WGAGVTLRFLLVLWVPTALGI), 257 to 277 (YLNAMVAVGIVVGAGAAAKLV), 281 to 301 (TVRRCMPAGILIGVGVLFFSL), 304 to 324 (ALLPAYGLLILIGILGGFFIV), 344 to 364 (IAVQNLGENTAMLLMLGLYSL), and 372 to 392 (VVGIGVGFGALFALAITGLWI).

This sequence belongs to the major facilitator superfamily. LplT (TC 2.A.1.42) family.

The protein localises to the cell inner membrane. Functionally, catalyzes the facilitated diffusion of 2-acyl-glycero-3-phosphoethanolamine (2-acyl-GPE) into the cell. The protein is Lysophospholipid transporter LplT of Enterobacter sp. (strain 638).